Reading from the N-terminus, the 342-residue chain is Holliday junction branch migration complex subunit RuvB (342 aa).

Positions 1–181 (MENRMVTPFD…FGMLCAMEFY (181 aa)) are large ATPase domain (RuvB-L). ATP contacts are provided by residues Leu20, Arg21, Gly62, Lys65, Thr66, Thr67, 128-130 (EDY), Arg171, Tyr181, and Arg218. Residue Thr66 participates in Mg(2+) binding. The tract at residues 182-252 (TDEELMEIVV…GAKAALDLLE (71 aa)) is small ATPAse domain (RuvB-S). The head domain (RuvB-H) stretch occupies residues 255 to 342 (KEGLDKIDNK…KDNQVSIFNK (88 aa)). DNA-binding residues include Arg310 and Arg315.

Belongs to the RuvB family. Homohexamer. Forms an RuvA(8)-RuvB(12)-Holliday junction (HJ) complex. HJ DNA is sandwiched between 2 RuvA tetramers; dsDNA enters through RuvA and exits via RuvB. An RuvB hexamer assembles on each DNA strand where it exits the tetramer. Each RuvB hexamer is contacted by two RuvA subunits (via domain III) on 2 adjacent RuvB subunits; this complex drives branch migration. In the full resolvosome a probable DNA-RuvA(4)-RuvB(12)-RuvC(2) complex forms which resolves the HJ.

The protein localises to the cytoplasm. It carries out the reaction ATP + H2O = ADP + phosphate + H(+). In terms of biological role, the RuvA-RuvB-RuvC complex processes Holliday junction (HJ) DNA during genetic recombination and DNA repair, while the RuvA-RuvB complex plays an important role in the rescue of blocked DNA replication forks via replication fork reversal (RFR). RuvA specifically binds to HJ cruciform DNA, conferring on it an open structure. The RuvB hexamer acts as an ATP-dependent pump, pulling dsDNA into and through the RuvAB complex. RuvB forms 2 homohexamers on either side of HJ DNA bound by 1 or 2 RuvA tetramers; 4 subunits per hexamer contact DNA at a time. Coordinated motions by a converter formed by DNA-disengaged RuvB subunits stimulates ATP hydrolysis and nucleotide exchange. Immobilization of the converter enables RuvB to convert the ATP-contained energy into a lever motion, pulling 2 nucleotides of DNA out of the RuvA tetramer per ATP hydrolyzed, thus driving DNA branch migration. The RuvB motors rotate together with the DNA substrate, which together with the progressing nucleotide cycle form the mechanistic basis for DNA recombination by continuous HJ branch migration. Branch migration allows RuvC to scan DNA until it finds its consensus sequence, where it cleaves and resolves cruciform DNA. This is Holliday junction branch migration complex subunit RuvB from Clostridium botulinum (strain 657 / Type Ba4).